The sequence spans 124 residues: Small ribosomal subunit protein uS12 (124 aa).

Asp89 is modified (3-methylthioaspartic acid).

Belongs to the universal ribosomal protein uS12 family. Part of the 30S ribosomal subunit. Contacts proteins S8 and S17. May interact with IF1 in the 30S initiation complex.

Functionally, with S4 and S5 plays an important role in translational accuracy. Its function is as follows. Interacts with and stabilizes bases of the 16S rRNA that are involved in tRNA selection in the A site and with the mRNA backbone. Located at the interface of the 30S and 50S subunits, it traverses the body of the 30S subunit contacting proteins on the other side and probably holding the rRNA structure together. The combined cluster of proteins S8, S12 and S17 appears to hold together the shoulder and platform of the 30S subunit. The protein is Small ribosomal subunit protein uS12 of Edwardsiella ictaluri (strain 93-146).